Consider the following 458-residue polypeptide: Bifunctional protein GlmU (458 aa).

The pyrophosphorylase stretch occupies residues 1–230; that stretch reads MHKRTAVVLA…EREILGINSR (230 aa). Residues 9–12, K23, Q73, and 78–79 each bind UDP-N-acetyl-alpha-D-glucosamine; these read LAAG and GT. Residue D103 coordinates Mg(2+). The UDP-N-acetyl-alpha-D-glucosamine site is built by G140, E155, N170, and N228. Mg(2+) is bound at residue N228. Residues 231-251 are linker; the sequence is VQLAEAEAVLQDRLRRKWMDA. An N-acetyltransferase region spans residues 252–458; it reads GVTLIDPPSV…FLGRKHKGSQ (207 aa). UDP-N-acetyl-alpha-D-glucosamine contacts are provided by R333 and K351. Catalysis depends on H363, which acts as the Proton acceptor. UDP-N-acetyl-alpha-D-glucosamine is bound by residues Y366 and N377. Residues A380, 386–387, S405, A423, and R440 each bind acetyl-CoA; that span reads NY.

This sequence in the N-terminal section; belongs to the N-acetylglucosamine-1-phosphate uridyltransferase family. The protein in the C-terminal section; belongs to the transferase hexapeptide repeat family. In terms of assembly, homotrimer. It depends on Mg(2+) as a cofactor.

The protein resides in the cytoplasm. The catalysed reaction is alpha-D-glucosamine 1-phosphate + acetyl-CoA = N-acetyl-alpha-D-glucosamine 1-phosphate + CoA + H(+). It catalyses the reaction N-acetyl-alpha-D-glucosamine 1-phosphate + UTP + H(+) = UDP-N-acetyl-alpha-D-glucosamine + diphosphate. Its pathway is nucleotide-sugar biosynthesis; UDP-N-acetyl-alpha-D-glucosamine biosynthesis; N-acetyl-alpha-D-glucosamine 1-phosphate from alpha-D-glucosamine 6-phosphate (route II): step 2/2. The protein operates within nucleotide-sugar biosynthesis; UDP-N-acetyl-alpha-D-glucosamine biosynthesis; UDP-N-acetyl-alpha-D-glucosamine from N-acetyl-alpha-D-glucosamine 1-phosphate: step 1/1. It functions in the pathway bacterial outer membrane biogenesis; LPS lipid A biosynthesis. Functionally, catalyzes the last two sequential reactions in the de novo biosynthetic pathway for UDP-N-acetylglucosamine (UDP-GlcNAc). The C-terminal domain catalyzes the transfer of acetyl group from acetyl coenzyme A to glucosamine-1-phosphate (GlcN-1-P) to produce N-acetylglucosamine-1-phosphate (GlcNAc-1-P), which is converted into UDP-GlcNAc by the transfer of uridine 5-monophosphate (from uridine 5-triphosphate), a reaction catalyzed by the N-terminal domain. This is Bifunctional protein GlmU from Heliobacterium modesticaldum (strain ATCC 51547 / Ice1).